Here is a 574-residue protein sequence, read N- to C-terminus: MWRRIFAHGLKYDQPNASSKNLILSVLNTTATKREAKDYLSKYTNDSGQHNHCLFFIRDLHKVAPAILSQFSSVIKRLGMLGLRPMFVIPPSPTHVNIQAELLDSIVTEADLKPLHFKEGLTKSRTGLYHSVFSQESRFFDIGNSNFIPIVKPYVYNEETASEFMTKDVVKFMDCLCQGNIPHIDKFFILNNAGGIPSGERNDNAHVFINLSQELEHLSSSLSHNISTLTKREPRSQNLLHRMEVYVKKDEISSLECEYHDHLENLLLMDKVLSNLAATATGLITTVKAAALSSDRKNPLVYNLLTDRSLISSSLPRFKKKDGEIDSPANMFDDHAWYELPSQQVNAAPSNSDAVLVTTVLKKGVHIKTYDYKTLTQFNSIGLPKEFHVSEKGAKPSNNSPKLDINKFKSIIDQSFKRSLDLHDYIKRINGKIATIIVIGDYEGIAILTYEGSEENSFVYLDKFAVLPHLKGSLGISDIIFNLMFKKFPNEILWRSRKDNVVNKWYFQRSVAVLDLSIDLDPEHCDEKQSQFKLFYYGNPQYAKRALRDKKRLREFMRSVRDIKPSWENEKNIS.

Residues 1–13 constitute a mitochondrion transit peptide; it reads MWRRIFAHGLKYD. Positions 392–560 constitute an N-acetyltransferase domain; sequence KGAKPSNNSP…KRLREFMRSV (169 aa).

The protein belongs to the acetyltransferase family. Interacts with the acetylglutamate kinase chain of AGR5,6.

It is found in the mitochondrion. The catalysed reaction is L-glutamate + acetyl-CoA = N-acetyl-L-glutamate + CoA + H(+). It participates in amino-acid biosynthesis; L-arginine biosynthesis; N(2)-acetyl-L-ornithine from L-glutamate: step 1/4. With respect to regulation, feedback inhibition by L-arginine. Its function is as follows. N-acetylglutamate synthase involved in arginine biosynthesis. This Saccharomyces cerevisiae (strain YJM789) (Baker's yeast) protein is Amino-acid acetyltransferase, mitochondrial (ARG2).